The primary structure comprises 472 residues: 3-isopropylmalate dehydratase large subunit (472 aa).

[4Fe-4S] cluster contacts are provided by cysteine 353, cysteine 414, and cysteine 417.

It belongs to the aconitase/IPM isomerase family. LeuC type 1 subfamily. As to quaternary structure, heterodimer of LeuC and LeuD. [4Fe-4S] cluster is required as a cofactor.

The catalysed reaction is (2R,3S)-3-isopropylmalate = (2S)-2-isopropylmalate. The protein operates within amino-acid biosynthesis; L-leucine biosynthesis; L-leucine from 3-methyl-2-oxobutanoate: step 2/4. In terms of biological role, catalyzes the isomerization between 2-isopropylmalate and 3-isopropylmalate, via the formation of 2-isopropylmaleate. This is 3-isopropylmalate dehydratase large subunit from Acinetobacter baumannii (strain AB307-0294).